A 108-amino-acid polypeptide reads, in one-letter code: Small ribosomal subunit protein uS10 (108 aa).

It belongs to the universal ribosomal protein uS10 family. Part of the 30S ribosomal subunit.

In terms of biological role, involved in the binding of tRNA to the ribosomes. This Rhodopirellula baltica (strain DSM 10527 / NCIMB 13988 / SH1) protein is Small ribosomal subunit protein uS10.